A 469-amino-acid chain; its full sequence is Coiled-coil domain-containing protein 6 (469 aa).

Residues 1–10 (MADSASESDT) are compositionally biased toward acidic residues. Positions 1-37 (MADSASESDTDAAGGGPAAMQSSCSATSGGSGGGGGG) are disordered. Alanine 2 bears the N-acetylalanine mark. Position 45 is a phosphoserine (serine 45). The stretch at 47–320 (FRLEELTNRL…LCRQLSESES (274 aa)) forms a coiled coil. 3 tandem repeats follow at residues 99-127 (EQEE…AVNY), 128-156 (EKEE…EQHL), and 157-185 (EQEQ…QLTL). The tract at residues 99 to 228 (EQEEEFISNT…AEKRILQEKL (130 aa)) is 5 X 29 AA tandem repeats. The stretch at 186–199 (EQLRREKIDLENTL) is one 4; approximate repeat. Residues 200–228 (EQEQEALVNRLWKRMDKLEAEKRILQEKL) form repeat 5. Phosphoserine is present on residues serine 233, serine 237, serine 242, serine 247, serine 277, and serine 316. The disordered stretch occupies residues 335-362 (AQGLRPRTVSSPIPYTPSPSSSRPISPG). Position 342 is a phosphothreonine (threonine 342). The segment covering 344-361 (SSPIPYTPSPSSSRPISP) has biased composition (low complexity). Residues serine 356 and serine 360 each carry the phosphoserine modification. Omega-N-methylarginine is present on arginine 380. Phosphoserine is present on residues serine 388 and serine 406. The disordered stretch occupies residues 394-469 (QHMGASHGIT…QHPVHPSSQP (76 aa)). The segment covering 419 to 444 (PTPPPSPNTQSPVQPPPPPPPPPMQP) has biased composition (pro residues). The SH3-binding motif lies at 435–444 (PPPPPPPMQP). Low complexity predominate over residues 460 to 469 (QHPVHPSSQP).

Its subcellular location is the cytoplasm. It localises to the cytoskeleton. The protein is Coiled-coil domain-containing protein 6 (Ccdc6) of Mus musculus (Mouse).